We begin with the raw amino-acid sequence, 201 residues long: Putative toxin HigB2 (201 aa).

Belongs to the mycobacterial HigB family.

Functionally, putative toxic component of a type II toxin-antitoxin (TA) system. Its cognate antitoxin would be HigA2. The sequence is that of Putative toxin HigB2 from Mycobacterium tuberculosis (strain ATCC 25618 / H37Rv).